The following is a 61-amino-acid chain: Large ribosomal subunit protein bL28 (61 aa).

It belongs to the bacterial ribosomal protein bL28 family.

In Lactobacillus johnsonii (strain CNCM I-12250 / La1 / NCC 533), this protein is Large ribosomal subunit protein bL28.